Consider the following 176-residue polypeptide: MSRVGKSPIALQGAEVKLADGAITVKGPLGTITQAINPLVNVANNDGTLNLSPVDESREANALSGTMRAIIANAVQGVTKGFERKLTLVGVGYRAQAQGDKLNLSLGFSHPVVHQMPEGVKAETPTQTEIVIKGINKQQVGQVAAEVRGYRPPEPYKGKGVRYSDEVVILKETKKK.

This sequence belongs to the universal ribosomal protein uL6 family. As to quaternary structure, part of the 50S ribosomal subunit.

Functionally, this protein binds to the 23S rRNA, and is important in its secondary structure. It is located near the subunit interface in the base of the L7/L12 stalk, and near the tRNA binding site of the peptidyltransferase center. The protein is Large ribosomal subunit protein uL6 of Burkholderia ambifaria (strain ATCC BAA-244 / DSM 16087 / CCUG 44356 / LMG 19182 / AMMD) (Burkholderia cepacia (strain AMMD)).